A 175-amino-acid chain; its full sequence is Ferritin light chain (175 aa).

S2 carries the N-acetylserine modification. Residues 7–156 (QNYSTEVEAA…DHLTNIQRLV (150 aa)) enclose the Ferritin-like diiron domain. 5 residues coordinate Fe cation: E54, E57, E58, E61, and E64. A catalytic site for iron oxidation region spans residues 54–61 (ELAEEKRE).

Belongs to the ferritin family. Oligomer of 24 subunits. There are two types of subunits: L (light) chain and H (heavy) chain. The major chain can be light or heavy, depending on the species and tissue type. The functional molecule forms a roughly spherical shell with a diameter of 12 nm and contains a central cavity into which the insoluble mineral iron core is deposited. Interacts with NCOA4.

It localises to the cytoplasmic vesicle. The protein resides in the autophagosome. It is found in the cytoplasm. Its subcellular location is the autolysosome. Its function is as follows. Stores iron in a soluble, non-toxic, readily available form. Important for iron homeostasis. Iron is taken up in the ferrous form and deposited as ferric hydroxides after oxidation. Also plays a role in delivery of iron to cells. Mediates iron uptake in capsule cells of the developing kidney. Delivery to lysosomes by the cargo receptor NCOA4 for autophagic degradation and release or iron. This Equus caballus (Horse) protein is Ferritin light chain (FTL).